Consider the following 251-residue polypeptide: Hydroxyacylglutathione hydrolase (251 aa).

7 residues coordinate Zn(2+): His-53, His-55, Asp-57, His-58, His-110, Asp-127, and His-165.

Belongs to the metallo-beta-lactamase superfamily. Glyoxalase II family. In terms of assembly, monomer. The cofactor is Zn(2+).

It carries out the reaction an S-(2-hydroxyacyl)glutathione + H2O = a 2-hydroxy carboxylate + glutathione + H(+). It participates in secondary metabolite metabolism; methylglyoxal degradation; (R)-lactate from methylglyoxal: step 2/2. In terms of biological role, thiolesterase that catalyzes the hydrolysis of S-D-lactoyl-glutathione to form glutathione and D-lactic acid. The polypeptide is Hydroxyacylglutathione hydrolase (Shigella boydii serotype 4 (strain Sb227)).